The primary structure comprises 947 residues: Translation initiation factor IF-2 (947 aa).

The interval 61-284 (IQANQPAKNP…TAKNNKSHKI (224 aa)) is disordered. Positions 151–169 (QIEKAKQKLQEIQKSREAL) are enriched in basic and acidic residues. Residues 175–188 (SNANNANSTNNANN) show a composition bias toward low complexity. Residues 189 to 206 (AKKEISEVKKQEQEIKRH) show a composition bias toward basic and acidic residues. Residues 207–218 (ENIKRRTGFRVI) are compositionally biased toward basic residues. Positions 247 to 262 (EDIKKEWQEKDKQEAK) are enriched in basic and acidic residues. A tr-type G domain is found at 446-615 (ERPPVVTIMG…LIQADIMELK (170 aa)). Residues 455 to 462 (GHVDHGKT) form a G1 region. Residue 455 to 462 (GHVDHGKT) coordinates GTP. A G2 region spans residues 480-484 (GITQH). The interval 501–504 (DTPG) is G3. Residues 501 to 505 (DTPGH) and 555 to 558 (NKMD) contribute to the GTP site. The interval 555–558 (NKMD) is G4. Residues 591–593 (SAK) are G5.

Belongs to the TRAFAC class translation factor GTPase superfamily. Classic translation factor GTPase family. IF-2 subfamily.

The protein localises to the cytoplasm. In terms of biological role, one of the essential components for the initiation of protein synthesis. Protects formylmethionyl-tRNA from spontaneous hydrolysis and promotes its binding to the 30S ribosomal subunits. Also involved in the hydrolysis of GTP during the formation of the 70S ribosomal complex. In Helicobacter pylori (strain P12), this protein is Translation initiation factor IF-2.